The chain runs to 184 residues: Fruit protein pKIWI501 (184 aa).

Residues 1-184 (MATVEVTPAV…TEVPVDKTEE (184 aa)) are disordered. Low complexity-rich tracts occupy residues 25–36 (PQEPQPEAAVAA) and 53–65 (PEAV…PAAT). The span at 72–92 (EVAEAEEEVVEEPQEVPEEPV) shows a compositional bias: acidic residues. Positions 96–119 (AAKEVEATEGKAEPTGEMKDKTPE) are enriched in basic and acidic residues. A compositionally biased stretch (low complexity) spans 120-156 (ATDAPEAPAAAEEPTDAPEAPAVAEEPTNAPEAPAVG). Positions 159–168 (PEAKEGKPDE) are enriched in basic and acidic residues.

This sequence to H.brasiliensis latex allergen Hev b 5.

The protein is Fruit protein pKIWI501 of Actinidia deliciosa (Kiwi).